Consider the following 76-residue polypeptide: ATP synthase subunit 9, mitochondrial (76 aa).

2 helical membrane-spanning segments follow: residues 10–30 and 52–72; these read IGAG…AIVF and ILGF…SFLL.

Belongs to the ATPase C chain family. F-type ATPases have 2 components, CF(1) - the catalytic core - and CF(0) - the membrane proton channel. CF(1) has five subunits: alpha(3), beta(3), gamma(1), delta(1), epsilon(1). CF(0) has three main subunits: a, b and c.

The protein resides in the mitochondrion membrane. Functionally, mitochondrial membrane ATP synthase (F(1)F(0) ATP synthase or Complex V) produces ATP from ADP in the presence of a proton gradient across the membrane which is generated by electron transport complexes of the respiratory chain. F-type ATPases consist of two structural domains, F(1) - containing the extramembraneous catalytic core and F(0) - containing the membrane proton channel, linked together by a central stalk and a peripheral stalk. During catalysis, ATP synthesis in the catalytic domain of F(1) is coupled via a rotary mechanism of the central stalk subunits to proton translocation. Part of the complex F(0) domain. A homomeric c-ring of probably 10 subunits is part of the complex rotary element. This Kluyveromyces lactis (strain ATCC 8585 / CBS 2359 / DSM 70799 / NBRC 1267 / NRRL Y-1140 / WM37) (Yeast) protein is ATP synthase subunit 9, mitochondrial (ATP9).